The primary structure comprises 465 residues: MIPVRGLEGRKVAVLGLGRSGLATARALQAGGAEPLLWDDSPEARANAEGQGFAVTDLTRERAFEDVALLVTSPGIPHLYPAPNPVIARAMAAGVPVDNDIGLFFRSFATRDWDAFDQMPRVVCVTGSNGKSTTTALIHHILAESGRPTQMAGNIGRGVLDLDPARDGEVVVLELSSYQTDLARALTPDVAVFTNLSPDHLDRHGGMGGYFAAKRRLFAEGGPDRAVIGVDEPEGLYLAGQLSVAPEDDRVIRISAGQKLERFGWAVFARKGFLAEWRKGRQMASIDLRAMPGLPGAHNHQNACAAYAACRTLGLAPRQIEEALGSFKGLPHRSQLVGERNGVRFVNDSKATNVDSAAKALQAFPKIRWIAGGLGKDGGIAALRPHLDAVVKAYLIGHSARDFALQMGATDHEICETMDRAVVRAAEEAQPGEVVLLAPAAASFDQYPNFEKRGEDFMERVKALL.

Residue 127-133 coordinates ATP; sequence GSNGKST.

Belongs to the MurCDEF family.

The protein resides in the cytoplasm. It carries out the reaction UDP-N-acetyl-alpha-D-muramoyl-L-alanine + D-glutamate + ATP = UDP-N-acetyl-alpha-D-muramoyl-L-alanyl-D-glutamate + ADP + phosphate + H(+). It functions in the pathway cell wall biogenesis; peptidoglycan biosynthesis. Functionally, cell wall formation. Catalyzes the addition of glutamate to the nucleotide precursor UDP-N-acetylmuramoyl-L-alanine (UMA). This chain is UDP-N-acetylmuramoylalanine--D-glutamate ligase, found in Cereibacter sphaeroides (strain ATCC 17025 / ATH 2.4.3) (Rhodobacter sphaeroides).